The following is a 344-amino-acid chain: RNA 3'-terminal phosphate cyclase (344 aa).

ATP contacts are provided by residues Gln-103 and 283–287 (HLADQ). His-308 (tele-AMP-histidine intermediate) is an active-site residue.

This sequence belongs to the RNA 3'-terminal cyclase family. Type 1 subfamily.

It is found in the cytoplasm. It catalyses the reaction a 3'-end 3'-phospho-ribonucleotide-RNA + ATP = a 3'-end 2',3'-cyclophospho-ribonucleotide-RNA + AMP + diphosphate. Its function is as follows. Catalyzes the conversion of 3'-phosphate to a 2',3'-cyclic phosphodiester at the end of RNA. The mechanism of action of the enzyme occurs in 3 steps: (A) adenylation of the enzyme by ATP; (B) transfer of adenylate to an RNA-N3'P to produce RNA-N3'PP5'A; (C) and attack of the adjacent 2'-hydroxyl on the 3'-phosphorus in the diester linkage to produce the cyclic end product. The biological role of this enzyme is unknown but it is likely to function in some aspects of cellular RNA processing. In Salmonella paratyphi C (strain RKS4594), this protein is RNA 3'-terminal phosphate cyclase.